The sequence spans 346 residues: MDMLDPGLDPASSATAAAAASHDKGPEAEEGVELQEGGDGPGAEEQTAVAIASVQQAAFGDHNIQYQFRTESNGGQVTYRVVQVTDGQLDGQGDAAGAVSVVSTAAFAGGQQAVTQVGVDGAAQRPGPAAASVPTGPAAPFPLAVIQNPFSNGGSPAAEAVSGEARFAYFPASSVGDTTAVSVQTTDQSLQAGGQFYVMMTPQDVLQTGTQRTIAPRTHPYSPKIDGTRTPRDERRRAQHNEVERRRRDKINNWIVQLSKIIPDCHADNSKTGASKGGILSKACDYIRELRQTNQRMQETFKEAERLQMDNELLRQQIEELKNENALLRAQLQQHNLEMVGESTRQ.

Disordered stretches follow at residues 1–44 and 215–244; these read MDML…PGAE and APRTHPYSPKIDGTRTPRDERRRAQHNEVE. Positions 11–20 are enriched in low complexity; it reads ASSATAAAAA. The segment covering 226–244 has biased composition (basic and acidic residues); sequence DGTRTPRDERRRAQHNEVE. Residues 235 to 290 enclose the bHLH domain; it reads RRRAQHNEVERRRRDKINNWIVQLSKIIPDCHADNSKTGASKGGILSKACDYIREL. The interval 307-328 is leucine-zipper; the sequence is LQMDNELLRQQIEELKNENALL.

Efficient DNA binding requires dimerization with another bHLH protein. Binds DNA as a homodimer or a heterodimer (USF1/USF2). Interacts with MAF.

The protein localises to the nucleus. In terms of biological role, transcription factor that binds to a symmetrical DNA sequence (E-boxes) (5'-CACGTG-3') that is found in a variety of viral and cellular promoters. This is Upstream stimulatory factor 2 (Usf2) from Mus musculus (Mouse).